A 207-amino-acid chain; its full sequence is Guanylate kinase (207 aa).

Residues 4–184 (GTLYIVSAPS…ALSDLKTIIR (181 aa)) form the Guanylate kinase-like domain. Position 11-18 (11-18 (APSGAGKS)) interacts with ATP.

It belongs to the guanylate kinase family.

The protein localises to the cytoplasm. It carries out the reaction GMP + ATP = GDP + ADP. In terms of biological role, essential for recycling GMP and indirectly, cGMP. The protein is Guanylate kinase (gmk) of Salmonella typhimurium (strain LT2 / SGSC1412 / ATCC 700720).